The primary structure comprises 129 residues: Lysozyme C (129 aa).

A C-type lysozyme domain is found at 1-129 (KVFGRCELAA…VHAWIRGCRL (129 aa)). 4 disulfides stabilise this stretch: Cys6-Cys127, Cys30-Cys115, Cys64-Cys80, and Cys76-Cys94. Active-site residues include Glu35 and Asp52.

It belongs to the glycosyl hydrolase 22 family. Monomer.

It is found in the secreted. It catalyses the reaction Hydrolysis of (1-&gt;4)-beta-linkages between N-acetylmuramic acid and N-acetyl-D-glucosamine residues in a peptidoglycan and between N-acetyl-D-glucosamine residues in chitodextrins.. In terms of biological role, lysozymes have primarily a bacteriolytic function; those in tissues and body fluids are associated with the monocyte-macrophage system and enhance the activity of immunoagents. This is Lysozyme C (LYZ) from Callipepla californica (California quail).